Reading from the N-terminus, the 227-residue chain is MSGILGKLFGAGAGGKGAGKGPSPQEAIQRLRDTEEMLSKKQEFLEKKIEQELAAARKHGTKNKRAALQALKRKKRYEKQLAQIDGTLSTIEFQREALENANTNTEVLKNMGFAAKAMKAAHDNMDIDKVDELMQDIAEQQELADEISTAISKPVGFGEEFDEDELMAELEELEQEELDKNLLEISGPETVPLPNVPSISIPSKPAKKKEEEEDDDMKELEAWAGNM.

Disordered stretches follow at residues 1–26 and 186–227; these read MSGI…SPQE and SGPE…AGNM. The span at 9–20 shows a compositional bias: gly residues; that stretch reads FGAGAGGKGAGK. Positions 25–185 form a coiled coil; sequence QEAIQRLRDT…EELDKNLLEI (161 aa).

Belongs to the SNF7 family. In terms of assembly, probable core component of the endosomal sorting required for transport complex III (ESCRT-III). ESCRT-III components are thought to multimerize to form a flat lattice on the perimeter membrane of the endosome.

Its subcellular location is the cytoplasm. It localises to the cytosol. The protein resides in the late endosome membrane. It is found in the midbody. Probable core component of the endosomal sorting required for transport complex III (ESCRT-III) which is involved in multivesicular bodies (MVBs) formation and sorting of endosomal cargo proteins into MVBs. MVBs contain intraluminal vesicles (ILVs) that are generated by invagination and scission from the limiting membrane of the endosome and mostly are delivered to lysosomes enabling degradation of membrane proteins, such as stimulated growth factor receptors, lysosomal enzymes and lipids. This is Charged multivesicular body protein 4b (CHMP4B) from Gallus gallus (Chicken).